The sequence spans 266 residues: Undecaprenyl-diphosphatase (266 aa).

8 helical membrane-spanning segments follow: residues 1–21, 43–63, 81–101, 109–129, 159–179, 183–203, 219–239, and 246–266; these read MVVI…SSTG, FLII…WKDI, LKII…DDII, VLIV…IEVV, LAMI…LLLG, PLAA…ATAL, YLAL…KWFM, and SFAS…VLLY.

Belongs to the UppP family.

Its subcellular location is the cell inner membrane. The enzyme catalyses di-trans,octa-cis-undecaprenyl diphosphate + H2O = di-trans,octa-cis-undecaprenyl phosphate + phosphate + H(+). Its function is as follows. Catalyzes the dephosphorylation of undecaprenyl diphosphate (UPP). Confers resistance to bacitracin. The polypeptide is Undecaprenyl-diphosphatase (Fusobacterium nucleatum subsp. nucleatum (strain ATCC 25586 / DSM 15643 / BCRC 10681 / CIP 101130 / JCM 8532 / KCTC 2640 / LMG 13131 / VPI 4355)).